Here is a 129-residue protein sequence, read N- to C-terminus: Large ribosomal subunit protein uL22 (129 aa).

The protein belongs to the universal ribosomal protein uL22 family. As to quaternary structure, part of the 50S ribosomal subunit.

This protein binds specifically to 23S rRNA; its binding is stimulated by other ribosomal proteins, e.g. L4, L17, and L20. It is important during the early stages of 50S assembly. It makes multiple contacts with different domains of the 23S rRNA in the assembled 50S subunit and ribosome. Its function is as follows. The globular domain of the protein is located near the polypeptide exit tunnel on the outside of the subunit, while an extended beta-hairpin is found that lines the wall of the exit tunnel in the center of the 70S ribosome. This is Large ribosomal subunit protein uL22 from Beijerinckia indica subsp. indica (strain ATCC 9039 / DSM 1715 / NCIMB 8712).